Consider the following 520-residue polypeptide: Signal peptide peptidase-like 2A (520 aa).

A signal peptide spans 1–25 (MGPQRRLSPAGAALLWGFLLQLTAA). Residues 26-172 (QEAILHASGN…PSWPNFDYTM (147 aa)) are Lumenal-facing. N-linked (GlcNAc...) asparagine glycosylation is found at Asn-58, Asn-66, Asn-74, Asn-116, Asn-126, and Asn-149. A PA domain is found at 63 to 151 (SLMNLTSTPL…YKDFRDMNQT (89 aa)). An N-linked (GlcNAc...) (complex) asparagine glycan is attached at Asn-155. A helical transmembrane segment spans residues 173 to 193 (VVIFVIAVFTVALGGYWSGLV). The Cytoplasmic portion of the chain corresponds to 194–220 (ELENLKAVTTEDREMRKKKEEYLTFSP). The chain crosses the membrane as a helical span at residues 221–241 (LTVVIFVVICCVMMVLLYFFY). Residues 242–247 (KWLVYV) lie on the Lumenal side of the membrane. The chain crosses the membrane as a helical span at residues 248 to 268 (MIAIFCIASAMSLYNCLAALI). The Cytoplasmic portion of the chain corresponds to 269 to 285 (HKIPYGQCTIACRGKNM). A helical transmembrane segment spans residues 286 to 306 (EVRLIFLSGLCIAVAVVWAVF). Over 307-311 (RNEDR) the chain is Lumenal. A helical membrane pass occupies residues 312 to 332 (WAWILQDILGIAFCLNLIKTL). Residues 333-340 (KLPNFKSC) lie on the Cytoplasmic side of the membrane. Residues 341-361 (VILLGLLLLYDVFFVFITPFI) form a helical membrane-spanning segment. Asp-351 is an active-site residue. Over 362 to 399 (TKNGESIMVELAAGPFGNNEKLPVVIRVPKLIYFSVMS) the chain is Lumenal. Residues 400–420 (VCLMPVSILGFGDIIVPGLLI) form a helical membrane-spanning segment. Asp-412 is an active-site residue. Residues 421 to 437 (AYCRRFDVQTGSSYIYY) lie on the Cytoplasmic side of the membrane. A helical transmembrane segment spans residues 438-458 (VSSTVAYAIGMILTFVVLVLM). The Lumenal segment spans residues 459–460 (KK). The chain crosses the membrane as a helical span at residues 461-481 (GQPALLYLVPCTLITASVVAW). A PAL motif is present at residues 463–465 (PAL). Residues 482–520 (RRKEMKKFWKGNSYQMMDHLDCATNEENPVISGEQIVQQ) are Cytoplasmic-facing. The YXXo lysosomal targeting motif motif lies at 495-498 (YQMM).

Belongs to the peptidase A22B family. As to quaternary structure, interacts with ITM2B. In terms of processing, glycosylated. As to expression, ubiquitous.

The protein resides in the late endosome membrane. The protein localises to the lysosome membrane. It is found in the membrane. Its function is as follows. Intramembrane-cleaving aspartic protease (I-CLiP) that cleaves type II membrane signal peptides in the hydrophobic plane of the membrane. Functions in FASLG, ITM2B and TNF processing. Catalyzes the intramembrane cleavage of the anchored fragment of shed TNF-alpha (TNF), which promotes the release of the intracellular domain (ICD) for signaling to the nucleus. Also responsible for the intramembrane cleavage of Fas antigen ligand FASLG, which promotes the release of the intracellular FasL domain (FasL ICD). Essential for degradation of the invariant chain CD74 that plays a central role in the function of antigen-presenting cells in the immune system. Plays a role in the regulation of innate and adaptive immunity. Catalyzes the intramembrane cleavage of the simian foamy virus envelope glycoprotein gp130 independently of prior ectodomain shedding by furin or furin-like proprotein convertase (PC)-mediated cleavage proteolysis. The protein is Signal peptide peptidase-like 2A of Homo sapiens (Human).